Reading from the N-terminus, the 394-residue chain is Putative transporter AraJ (394 aa).

Over M1–V4 the chain is Cytoplasmic. Residues I5–T27 form a helical membrane-spanning segment. Residues E28–G41 lie on the Periplasmic side of the membrane. The helical transmembrane segment at H42–S63 threads the bilayer. At R64 to H69 the chain is on the cytoplasmic side. The chain crosses the membrane as a helical span at residues I70–S89. The Periplasmic segment spans residues S90–M93. A helical transmembrane segment spans residues L94–L116. The Cytoplasmic portion of the chain corresponds to S117 to A128. Residues V129 to S151 form a helical membrane-spanning segment. The Periplasmic portion of the chain corresponds to Q152–S155. Residues W156–V178 traverse the membrane as a helical segment. Residues P179–S198 are Cytoplasmic-facing. Residues P199 to Y221 form a helical membrane-spanning segment. Over V222–T235 the chain is Periplasmic. The helical transmembrane segment at A236 to S255 threads the bilayer. Topologically, residues G256–R261 are cytoplasmic. A helical transmembrane segment spans residues Y262–F284. Topologically, residues C285–L293 are periplasmic. A helical transmembrane segment spans residues I294–Q316. The Cytoplasmic portion of the chain corresponds to N317–E322. A helical membrane pass occupies residues L323–Y342. Residues C343–G351 lie on the Periplasmic side of the membrane. A helical transmembrane segment spans residues L352 to L374. Over Y375–G394 the chain is Cytoplasmic.

It belongs to the major facilitator superfamily.

It localises to the cell inner membrane. Its function is as follows. May be involved in either the transport or processing of arabinose polymers. In Escherichia coli (strain K12), this protein is Putative transporter AraJ (araJ).